Consider the following 317-residue polypeptide: Melanocyte-stimulating hormone receptor (317 aa).

Topologically, residues 1-37 (MPVQGSQRRLLGSLNSTPTATPKLGLAANQTGAQCLE) are extracellular. The N-linked (GlcNAc...) asparagine glycan is linked to asparagine 29. The helical transmembrane segment at 38–63 (VSIPDGLFLSLGLVSLVENVLVVAAI) threads the bilayer. Residues 64–72 (ARNRNLHSP) are Cytoplasmic-facing. Residues 73–93 (MYCFICCLALSDLLVSGSNML) form a helical membrane-spanning segment. Residues 94 to 118 (ETAVILLLEAGALAARAAVVQQLDN) lie on the Extracellular side of the membrane. The helical transmembrane segment at 119–140 (VIDVITCSSMLSSLCFLGAIAM) threads the bilayer. The Cytoplasmic segment spans residues 141–163 (DRYISIFYALRYHSIVTLPRARG). Residues 164–183 (VVAAIWVASILFSTLFIAYY) form a helical membrane-spanning segment. The Extracellular segment spans residues 184–191 (DHVAVLLC). The chain crosses the membrane as a helical span at residues 192-211 (LVVFFLAMLVLMAVLYVHML). Residues 212 to 240 (ARACQHAQGIAQLHKRQRPAHQGVGLKGA) lie on the Cytoplasmic side of the membrane. A helical transmembrane segment spans residues 241–266 (ATLTILLGIFFLCWGPFFLHLTLIVL). The Extracellular segment spans residues 267 to 279 (CPQHPTCSCIFKN). The helical transmembrane segment at 280-300 (FNLFLALIICNAIIDPLIYAF) threads the bilayer. The Cytoplasmic segment spans residues 301 to 317 (RSQELRRTLKKVLLCSW). A lipid anchor (S-palmitoyl cysteine) is attached at cysteine 315.

This sequence belongs to the G-protein coupled receptor 1 family. As to quaternary structure, interacts with MGRN1, but does not undergo MGRN1-mediated ubiquitination; this interaction competes with GNAS-binding and thus inhibits agonist-induced cAMP production. Interacts with OPN3; the interaction results in a decrease in MC1R-mediated cAMP signaling and ultimately a decrease in melanin production in melanocytes.

It localises to the cell membrane. Functionally, receptor for MSH (alpha, beta and gamma) and ACTH. The activity of this receptor is mediated by G proteins which activate adenylate cyclase. Mediates melanogenesis, the production of eumelanin (black/brown) and phaeomelanin (red/yellow), via regulation of cAMP signaling in melanocytes. The protein is Melanocyte-stimulating hormone receptor (MC1R) of Presbytis comata (Grizzled leaf monkey).